The chain runs to 341 residues: HTH-type transcriptional repressor PurR (341 aa).

One can recognise an HTH lacI-type domain in the interval 2–56 (ATIKDVAKRAGVSTTTVSHVINKTRFVAENTRAAVWAAIKELNYSPSAVARSLKV). Residues 4–23 (IKDVAKRAGVSTTTVSHVIN) constitute a DNA-binding region (H-T-H motif). Residues 48–56 (SAVARSLKV) mediate DNA binding. Tyr-73, Arg-190, Thr-192, Phe-221, and Asp-275 together coordinate hypoxanthine.

In terms of assembly, homodimer.

It functions in the pathway purine metabolism; purine nucleotide biosynthesis [regulation]. Is the main repressor of the genes involved in the de novo synthesis of purine nucleotides, regulating purB, purC, purEK, purF, purHD, purL, purMN and guaBA expression. PurR is allosterically activated to bind its cognate DNA by binding the purine corepressors, hypoxanthine or guanine, thereby effecting transcription repression. The polypeptide is HTH-type transcriptional repressor PurR (Proteus mirabilis (strain HI4320)).